A 479-amino-acid polypeptide reads, in one-letter code: F-box protein SKIP17 (479 aa).

One can recognise an F-box domain in the interval 92-138; the sequence is NSNSWSLPPELTIKVFSMLDTKSMMQAAVCCTMFNKCAMDRLCYSHI. The interval 435 to 479 is disordered; the sequence is EMMEAEDDEVDEEDDSDDDTDDVSDEDESENDDDMGMGFDVDYLL. A compositionally biased stretch (acidic residues) spans 437–469; that stretch reads MEAEDDEVDEEDDSDDDTDDVSDEDESENDDDM.

In terms of assembly, part of a SCF (ASK-cullin-F-box) protein ligase complex. Interacts with SPK1B/ASK2.

The protein resides in the nucleus. Its pathway is protein modification; protein ubiquitination. In terms of biological role, component of SCF(ASK-cullin-F-box) E3 ubiquitin ligase complexes, which may mediate the ubiquitination and subsequent proteasomal degradation of target proteins. This is F-box protein SKIP17 (SKIP17) from Arabidopsis thaliana (Mouse-ear cress).